Here is an 899-residue protein sequence, read N- to C-terminus: MSRRRKHGDSSGLKQTPRKAMATEEGSLVFESGKRRLRAARGSGPQGPGERPPRPLPQQEQPPVAASCRKSNTEERYETPKRMLQMDLLSSTFSSPNDPDGQNDIFWDQNSPMTKQLDKGRKKQLYTTDSDEISHIVNRIAPQDEKPTTDSMLGVWIGDTAIPCTPSVAKGKSRTKLSCTKLKSQNQEEELMKLAKQFDKNMEELDVIQEQDKRNHDLIQMISEAETSLNCRDNVQMQLLCDTVPEIDKALLKKPVKENTKISVVNDQTSSQKPFDQNAEAAFIAMFDGSTQKCSGQLSQDLSDSFLKTSNTTFGKKNTLKEEKIITNESVVTENLPSKTLGSLSHQVDNPGMTKSYVTFCTKEPGTFNKHIDTFTTSDFEDDWENLLSNEPFVMQNIETSELFPAPKTIQIADQKEMCSFNSKEAKSKSGMNKSVDVKLRDSKILQGLPSNTWNNELTDAEKYRFSPKPNDKPNKLSTTGNKMKLEKSFNIVVNQDKIQDCAVASNLTKVNEDTHTKFNCKVNASEKKSALKPGCSNKSIFNQSLKVPANVKPFGSATLGSTTSVCNPDQTNGSKLGSFFDDWNDPSFTNEIVKACHQLENSWEADDVDDDILYQACDDIERLTQEQNIRVDSKTSESVLEINNSSKHGAKNVFTTPKQGSQFMQSKHLNLNSISAQTSSLANSLQINKSVKMERGEMYGNSPGFLGATTNLSIYSKNSDCQISNLHVSCNNPDVPKQVNSSKSVLTGSSSLNVGSHHMSTEIAASKNRLSTLHLSKSTTRGKAQSDLNRAVRLSEYVFTKMKNCPMLSPFNNSSVTGSISDTKIAQGLEKNKTVNPLPGKAVQQQPLVKFSEPLKQPSKEEEEKNRKCSPEEIQRKRQAALIRRMAKAQASSVKKGR.

The segment at 1–82 (MSRRRKHGDS…TEERYETPKR (82 aa)) is disordered. Residues 71–81 (SNTEERYETPK) show a composition bias toward basic and acidic residues. Positions 105–111 (IFWDQNS) match the ATR-activation domain (AAD) motif. Residues 180 to 210 (TKLKSQNQEEELMKLAKQFDKNMEELDVIQE) are a coiled coil. Residues Lys-416 and Lys-444 each participate in a glycyl lysine isopeptide (Lys-Gly) (interchain with G-Cter in SUMO2) cross-link. Ser-467 bears the Phosphoserine mark. Residues Lys-485 and Lys-539 each participate in a glycyl lysine isopeptide (Lys-Gly) (interchain with G-Cter in SUMO2) cross-link. The RBM1 motif signature appears at 607 to 622 (DDVDDDILYQACDDIE). Residue Ser-810 is modified to Phosphoserine. The interval 833–899 (NKTVNPLPGK…AQASSVKKGR (67 aa)) is disordered. Positions 859–877 (PSKEEEEKNRKCSPEEIQR) are enriched in basic and acidic residues. The short motif at 868–890 (RKCSPEEIQRKRQAALIRRMAKA) is the RBM2 motif element.

In terms of assembly, interacts (via RBM1 motif) with RPA1. Interacts (via RBM2 motif) with RPA2. Interacts (via the ATR-activation domain motif) with ATR. In terms of processing, phosphorylated by ATR.

Its subcellular location is the nucleus. Its function is as follows. Replication stress response protein that accumulates at DNA damage sites and promotes replication fork progression and integrity. Recruited to stalled replication forks via interaction with the RPA complex and directly stimulates ATR kinase activity independently of TOPBP1. Probably only regulates a subset of ATR targets. In Bos taurus (Bovine), this protein is Ewing's tumor-associated antigen 1 homolog.